Reading from the N-terminus, the 142-residue chain is MKLTAEDKHNVKAIWDHVKGHEEAIGAEALYRMFCCMPTTRIYFPAKDLSERSSYLHSHGKKVVGALTNAVAHIDDIDTAFSKLSDKHAEELMVDPANFPKLAHNILVVLGIHLKPHFTYSVHRSVDKFLSTVAYVLASKYR.

The 141-residue stretch at 2–142 (KLTAEDKHNV…VAYVLASKYR (141 aa)) folds into the Globin domain. Histidine 59 contacts O2. Residue histidine 88 coordinates heme b.

Belongs to the globin family. As to quaternary structure, major hemoglobin is a heterotetramer of two alpha-1 chains and two beta-1 chains. As to expression, red blood cells.

Involved in oxygen transport from the lung to the various peripheral tissues. The protein is Hemoglobin subunit alpha-1 of Pleurodeles waltl (Iberian ribbed newt).